The chain runs to 398 residues: 1-deoxy-D-xylulose 5-phosphate reductoisomerase (398 aa).

The NADPH site is built by threonine 11, glycine 12, serine 13, isoleucine 14, arginine 38, asparagine 39, and asparagine 125. Lysine 126 is a binding site for 1-deoxy-D-xylulose 5-phosphate. NADPH is bound at residue glutamate 127. Mn(2+) is bound at residue aspartate 151. 1-deoxy-D-xylulose 5-phosphate contacts are provided by serine 152, glutamate 153, serine 179, and histidine 202. Mn(2+) is bound at residue glutamate 153. Glycine 208 lines the NADPH pocket. 1-deoxy-D-xylulose 5-phosphate is bound by residues serine 215, asparagine 220, lysine 221, and glutamate 224. A Mn(2+)-binding site is contributed by glutamate 224.

The protein belongs to the DXR family. Requires Mg(2+) as cofactor. Mn(2+) is required as a cofactor.

It carries out the reaction 2-C-methyl-D-erythritol 4-phosphate + NADP(+) = 1-deoxy-D-xylulose 5-phosphate + NADPH + H(+). It functions in the pathway isoprenoid biosynthesis; isopentenyl diphosphate biosynthesis via DXP pathway; isopentenyl diphosphate from 1-deoxy-D-xylulose 5-phosphate: step 1/6. Its function is as follows. Catalyzes the NADPH-dependent rearrangement and reduction of 1-deoxy-D-xylulose-5-phosphate (DXP) to 2-C-methyl-D-erythritol 4-phosphate (MEP). The polypeptide is 1-deoxy-D-xylulose 5-phosphate reductoisomerase (Burkholderia vietnamiensis (strain G4 / LMG 22486) (Burkholderia cepacia (strain R1808))).